The primary structure comprises 161 residues: Allophycocyanin alpha chain (161 aa).

Residue asparagine 71 is modified to N4-methylasparagine. Cysteine 81 contacts (2R,3E)-phycocyanobilin.

This sequence belongs to the phycobiliprotein family. As to quaternary structure, heterodimer of an alpha and a beta chain. In terms of processing, contains one covalently linked phycocyanobilin chromophore.

The protein localises to the plastid. Its subcellular location is the cyanelle thylakoid membrane. In terms of biological role, light-harvesting photosynthetic bile pigment-protein from the phycobiliprotein complex. Allophycocyanin has a maximum absorption at approximately 650 nanometers. The polypeptide is Allophycocyanin alpha chain (apcA) (Cyanophora paradoxa).